The sequence spans 532 residues: Fe-S cluster assembly factor HCF101, chloroplastic (532 aa).

A chloroplast-targeting transit peptide spans 1 to 61; that stretch reads MPLLHPQSLR…RVSQNLSVAK (61 aa). Residue A62 is modified to N-acetylalanine. Position 184–191 (184–191) interacts with ATP; the sequence is CKGGVGKS.

This sequence belongs to the Mrp/NBP35 ATP-binding proteins family. The cofactor is [4Fe-4S] cluster. In terms of tissue distribution, expressed in aerial tissues exposed to light. Very low expression in roots.

The protein resides in the plastid. It is found in the chloroplast stroma. Functionally, required for photosystem I (PSI) biosynthesis and assembly. May serve as a chloroplast scaffold protein that specifically assembles iron-sulfur (4Fe-4S) clusters and transfers them to the chloroplast PSI and ferredoxin-thioredoxin (FTR) complexes. Can assemble a 4Fe-4S cluster and transfer it to apoproteins in yeast cells. Probably not required for assembly or stability of plastidic 2Fe-2S clusters. The chain is Fe-S cluster assembly factor HCF101, chloroplastic (HCF101) from Arabidopsis thaliana (Mouse-ear cress).